The sequence spans 391 residues: Superoxide dismutase [Fe] 1, chloroplastic (391 aa).

The transit peptide at 1–73 (MAFATLVGVG…GESTNSRVLQ (73 aa)) directs the protein to the chloroplast. Residues 87 to 119 (VNDGIDDETASDAEMDEDAEANGDESSGTDEDA) are compositionally biased toward acidic residues. A disordered region spans residues 87–120 (VNDGIDDETASDAEMDEDAEANGDESSGTDEDAS). Residues His148, His202, Asp301, and His305 each coordinate Fe cation. Positions 370–391 (MPQQVNGDAREQTSGQEKSLGV) are disordered. Over residues 381 to 391 (QTSGQEKSLGV) the composition is skewed to polar residues.

Belongs to the iron/manganese superoxide dismutase family. As to quaternary structure, homodimer. The cofactor is Fe cation.

Its subcellular location is the plastid. The protein localises to the chloroplast. It carries out the reaction 2 superoxide + 2 H(+) = H2O2 + O2. Its function is as follows. Destroys superoxide anion radicals which are normally produced within the cells and which are toxic to biological systems. The chain is Superoxide dismutase [Fe] 1, chloroplastic from Oryza sativa subsp. japonica (Rice).